A 358-amino-acid chain; its full sequence is Photosystem II protein D1 1 (358 aa).

3 consecutive transmembrane segments (helical) span residues 28-45 (YVGW…AATI), 117-132 (HFLI…QWEL), and 141-155 (WICV…AAFA). His117 serves as a coordination point for chlorophyll a. Tyr125 is a binding site for pheophytin a. [CaMn4O5] cluster-binding residues include Asp169 and Glu188. Residues 196 to 217 (FHMLGVAGVFGGSLFSAMHGSL) form a helical membrane-spanning segment. Residue His197 coordinates chlorophyll a. Residues His214 and 263–264 (SF) each bind a quinone. His214 provides a ligand contact to Fe cation. A Fe cation-binding site is contributed by His271. Residues 273–287 (FLGAWPVIGIWFTSM) form a helical membrane-spanning segment. [CaMn4O5] cluster is bound by residues His331, Glu332, Asp341, and Ala343. The propeptide occupies 344–358 (AAESTPVALQAPAIG).

The protein belongs to the reaction center PufL/M/PsbA/D family. As to quaternary structure, PSII is composed of 1 copy each of membrane proteins PsbA, PsbB, PsbC, PsbD, PsbE, PsbF, PsbH, PsbI, PsbJ, PsbK, PsbL, PsbM, PsbT, PsbX, PsbY, PsbZ, Psb30/Ycf12, peripheral proteins PsbO, CyanoQ (PsbQ), PsbU, PsbV and a large number of cofactors. It forms dimeric complexes. The D1/D2 heterodimer binds P680, chlorophylls that are the primary electron donor of PSII, and subsequent electron acceptors. It shares a non-heme iron and each subunit binds pheophytin, quinone, additional chlorophylls, carotenoids and lipids. D1 provides most of the ligands for the Mn4-Ca-O5 cluster of the oxygen-evolving complex (OEC). There is also a Cl(-1) ion associated with D1 and D2, which is required for oxygen evolution. The PSII complex binds additional chlorophylls, carotenoids and specific lipids. is required as a cofactor. In terms of processing, tyr-160 forms a radical intermediate that is referred to as redox-active TyrZ, YZ or Y-Z. Post-translationally, C-terminally processed by CtpA; processing is essential to allow assembly of the oxygen-evolving complex and thus photosynthetic growth.

It localises to the cellular thylakoid membrane. The catalysed reaction is 2 a plastoquinone + 4 hnu + 2 H2O = 2 a plastoquinol + O2. In terms of biological role, photosystem II (PSII) is a light-driven water:plastoquinone oxidoreductase that uses light energy to abstract electrons from H(2)O, generating O(2) and a proton gradient subsequently used for ATP formation. It consists of a core antenna complex that captures photons, and an electron transfer chain that converts photonic excitation into a charge separation. The D1/D2 (PsbA/PsbD) reaction center heterodimer binds P680, the primary electron donor of PSII as well as several subsequent electron acceptors. In Synechococcus sp. (strain CC9902), this protein is Photosystem II protein D1 1.